Reading from the N-terminus, the 443-residue chain is ATP-dependent RNA helicase SUB2 (443 aa).

Positions 60-88 match the Q motif motif; the sequence is TGFRDFLLKPELLRAITDCGFEHPSEVQQ. One can recognise a Helicase ATP-binding domain in the interval 91 to 266; that stretch reads IPTAILKVDV…KKFMRNPLEV (176 aa). 104–111 lines the ATP pocket; sequence AKSGLGKT. Residues 213-216 carry the DEAD box motif; that stretch reads DECD. The Helicase C-terminal domain occupies 294–439; that stretch reads KLNELLDNLE…EYPEEGVDAS (146 aa).

It belongs to the DEAD box helicase family. DECD subfamily.

It localises to the nucleus. It carries out the reaction ATP + H2O = ADP + phosphate + H(+). Functionally, ATP-binding RNA helicase involved in transcription elongation and required for the export of mRNA out of the nucleus. SUB2 also plays a role in pre-mRNA splicing and spliceosome assembly. May be involved in rDNA and telomeric silencing, and maintenance of genome integrity. The polypeptide is ATP-dependent RNA helicase SUB2 (SUB2) (Coccidioides immitis (strain RS) (Valley fever fungus)).